The chain runs to 542 residues: 3-(3-hydroxy-phenyl)propionate/3-hydroxycinnamic acid hydroxylase (542 aa).

FAD contacts are provided by residues 10 to 39 and 278 to 288; these read SVAI…VVER and FVAGRVALIGD.

The protein belongs to the PheA/TfdB FAD monooxygenase family. FAD serves as cofactor.

It carries out the reaction 3-(3-hydroxyphenyl)propanoate + NADH + O2 + H(+) = 3-(2,3-dihydroxyphenyl)propanoate + NAD(+) + H2O. It catalyses the reaction (2E)-3-(3-hydroxyphenyl)prop-2-enoate + NADH + O2 + H(+) = (2E)-3-(2,3-dihydroxyphenyl)prop-2-enoate + NAD(+) + H2O. It participates in aromatic compound metabolism; 3-phenylpropanoate degradation. Functionally, catalyzes the insertion of one atom of molecular oxygen into position 2 of the phenyl ring of 3-(3-hydroxyphenyl)propionate (3-HPP) and hydroxycinnamic acid (3HCI). The chain is 3-(3-hydroxy-phenyl)propionate/3-hydroxycinnamic acid hydroxylase from Burkholderia cenocepacia (strain HI2424).